We begin with the raw amino-acid sequence, 64 residues long: QINGSYKLEKSDNFDAFLKELGLNFVTRNLAKSATPTVEVSVNGDSYTIKTASTLKNTEISFKL.

Belongs to the calycin superfamily. Fatty-acid binding protein (FABP) family.

It is found in the cytoplasm. Its function is as follows. FABPs are thought to play a role in the intracellular transport of long-chain fatty acids and their acyl-CoA esters. The polypeptide is Fatty acid-binding protein (Acarus siro (Flour mite)).